We begin with the raw amino-acid sequence, 121 residues long: MQYLFVFIGGLFGALLRYVLSTLNVDSGLPLGTLIANIVGAFLMGYLSSLSIHFFKNNPLIKKGVTTGLLGALTTFSTFQFELVTMSQNNSIALLFIYGLTSYIGGILFCWFGVKLGGQPT.

Helical transmembrane passes span 3-23 (YLFV…LSTL), 27-47 (SGLP…MGYL), 64-84 (GVTT…FELV), and 92-112 (IALL…FCWF). Residues glycine 71 and threonine 74 each coordinate Na(+).

It belongs to the fluoride channel Fluc/FEX (TC 1.A.43) family.

The protein localises to the cell membrane. It carries out the reaction fluoride(in) = fluoride(out). Its activity is regulated as follows. Na(+) is not transported, but it plays an essential structural role and its presence is essential for fluoride channel function. Functionally, fluoride-specific ion channel. Important for reducing fluoride concentration in the cell, thus reducing its toxicity. This is Fluoride-specific ion channel FluC 2 from Staphylococcus haemolyticus (strain JCSC1435).